A 65-amino-acid polypeptide reads, in one-letter code: Disintegrin CC5 (65 aa).

The region spanning 1 to 65 (MNSAHPCCDP…SDCPRNRYKS (65 aa)) is the Disintegrin domain. 4 cysteine pairs are disulfide-bonded: Cys-7/Cys-30, Cys-21/Cys-27, Cys-26/Cys-51, and Cys-39/Cys-58. The Cell attachment site motif lies at 43-45 (RGD).

Belongs to the disintegrin family. Dimeric disintegrin subfamily. As to quaternary structure, homodimer; disulfide-linked. Expressed by the venom gland.

The protein resides in the secreted. Functionally, binds and inhibits integrins alpha-IIb/beta-3 (ITGA2B/ITGB3), alpha-V/beta-3 (ITGAV/ITGB3) and alpha-5/beta-1 (ITGA5/ITGB1). In Cerastes cerastes (Horned desert viper), this protein is Disintegrin CC5.